A 257-amino-acid chain; its full sequence is Hydroxypyruvate/pyruvate aldolase (257 aa).

His48 serves as the catalytic Proton acceptor. 2 residues coordinate a divalent metal cation: Glu152 and Asp178.

This sequence belongs to the HpcH/HpaI aldolase family. A divalent metal cation is required as a cofactor.

It carries out the reaction D-glyceraldehyde + 3-hydroxypyruvate = 2-dehydro-D-gluconate. The enzyme catalyses D-glyceraldehyde + pyruvate = 2-dehydro-3-deoxy-L-galactonate. It catalyses the reaction 2-dehydro-3-deoxy-D-gluconate = D-glyceraldehyde + pyruvate. Aldolase which can catalyze in vitro the aldolisation reaction between hydroxypyruvate (HPA) or pyruvate (PA) and D-glyceraldehyde (D-GA). The condensation of hydroxypyruvate and D-glyceraldehyde produces 2-dehydro-D-gluconate as the major product. The condensation of pyruvate and D-glyceraldehyde produces 2-dehydro-3-deoxy-L-galactonate as the major product and 2-dehydro-3-deoxy-D-gluconate. This chain is Hydroxypyruvate/pyruvate aldolase, found in Roseovarius nubinhibens (strain ATCC BAA-591 / DSM 15170 / ISM).